A 482-amino-acid chain; its full sequence is Cardiolipin synthase (482 aa).

The next 2 membrane-spanning stretches (helical) occupy residues 4-24 and 34-54; these read LAYLLVILLILNVFFAAVTVF and WAWLLVLTFVPIFGFIIYLIF. PLD phosphodiesterase domains are found at residues 217–244 and 395–422; these read LNYRNHRKLAIIDGDVGYIGGFNIGDEY and DNGFIHAKTLVVDGEIASVGTANMDFRS. Catalysis depends on residues His222, Lys224, Asp229, His400, Lys402, and Asp407.

Belongs to the phospholipase D family. Cardiolipin synthase subfamily.

It is found in the cell membrane. It carries out the reaction 2 a 1,2-diacyl-sn-glycero-3-phospho-(1'-sn-glycerol) = a cardiolipin + glycerol. Functionally, catalyzes the reversible phosphatidyl group transfer from one phosphatidylglycerol molecule to another to form cardiolipin (CL) (diphosphatidylglycerol) and glycerol. The protein is Cardiolipin synthase (cls) of Listeria monocytogenes serotype 4a (strain HCC23).